We begin with the raw amino-acid sequence, 251 residues long: uncharacterized protein (251 aa).

Residue 10–34 participates in NADP(+) binding; that stretch reads ITGAGSGIGKKAAVMFAERGAKVAI. Ser139 lines the substrate pocket. Tyr152 (proton acceptor) is an active-site residue.

The protein belongs to the short-chain dehydrogenases/reductases (SDR) family.

This is an uncharacterized protein from Thermotoga maritima (strain ATCC 43589 / DSM 3109 / JCM 10099 / NBRC 100826 / MSB8).